Reading from the N-terminus, the 424-residue chain is CinA-like protein (424 aa).

It belongs to the CinA family.

The chain is CinA-like protein from Nostoc sp. (strain PCC 7120 / SAG 25.82 / UTEX 2576).